The chain runs to 469 residues: ATP synthase subunit beta (469 aa).

An ATP-binding site is contributed by 156-163 (GGAGVGKT).

The protein belongs to the ATPase alpha/beta chains family. F-type ATPases have 2 components, CF(1) - the catalytic core - and CF(0) - the membrane proton channel. CF(1) has five subunits: alpha(3), beta(3), gamma(1), delta(1), epsilon(1). CF(0) has three main subunits: a(1), b(2) and c(9-12). The alpha and beta chains form an alternating ring which encloses part of the gamma chain. CF(1) is attached to CF(0) by a central stalk formed by the gamma and epsilon chains, while a peripheral stalk is formed by the delta and b chains.

The protein localises to the cell membrane. The catalysed reaction is ATP + H2O + 4 H(+)(in) = ADP + phosphate + 5 H(+)(out). Its function is as follows. Produces ATP from ADP in the presence of a proton gradient across the membrane. The catalytic sites are hosted primarily by the beta subunits. This Lactococcus lactis subsp. lactis (strain IL1403) (Streptococcus lactis) protein is ATP synthase subunit beta.